A 1080-amino-acid polypeptide reads, in one-letter code: Putative bifunctional amine oxidase DDB_G0291301 (1080 aa).

The segment at 1–450 (MREFLKDDYD…TIAKSTVPTN (450 aa)) is putative sarcosine oxidase. 10 to 40 (DVIVCGGGPVGLATAYRCAKAGKKVLCLEKS) contributes to the FAD binding site. Residues 445 to 464 (STVPTNQSSNPDGASSTAPT) are disordered. The interval 450–1080 (NQSSNPDGAS…NTAASIGGLK (631 aa)) is putative L-amino-acid oxidase. Residues 508-528 (VGIIGAGMAGLYAAMILQDLG) traverse the membrane as a helical segment. FAD contacts are provided by residues glutamate 535, arginine 544, and 563 to 564 (GA). Tyrosine 886 serves as a coordination point for substrate. Residues glutamate 978 and 987-990 (VIGS) each bind FAD.

The protein in the N-terminal section; belongs to the MSOX/MTOX family. In the C-terminal section; belongs to the flavin monoamine oxidase family. It depends on FAD as a cofactor.

The protein resides in the membrane. It carries out the reaction sarcosine + O2 + H2O = formaldehyde + glycine + H2O2. It catalyses the reaction L-pipecolate + O2 = L-1-piperideine-6-carboxylate + H2O2 + H(+). The enzyme catalyses an L-alpha-amino acid + O2 + H2O = a 2-oxocarboxylate + H2O2 + NH4(+). Its function is as follows. Catalyzes an oxidative deamination of predominantly hydrophobic and aromatic L-amino acids. Metabolizes sarcosine, L-pipecolic acid and L-proline. In Dictyostelium discoideum (Social amoeba), this protein is Putative bifunctional amine oxidase DDB_G0291301.